A 336-amino-acid chain; its full sequence is Ketoreductase adrE (336 aa).

Residue Tyr-171 participates in NADP(+) binding.

The protein belongs to the NAD(P)-dependent epimerase/dehydratase family. Dihydroflavonol-4-reductase subfamily.

The protein operates within secondary metabolite biosynthesis; terpenoid biosynthesis. Its function is as follows. Ketoreductase; part of the gene cluster that mediates the biosynthesis of andrastins, meroterpenoid compounds that exhibit inhibitory activity against ras farnesyltransferase, suggesting that they could be promising leads for antitumor agents. The first step of the pathway is the synthesis of 3,5-dimethylorsellinic acid (DMOA) by the polyketide synthase adrD via condensation of one acetyl-CoA starter unit with 3 malonyl-CoA units and 2 methylations. DMAO is then converted to farnesyl-DMAO by the prenyltransferase adrG. The methyltransferase adrK catalyzes the methylation of the carboxyl group of farnesyl-DMAO to farnesyl-DMAO methyl ester which is further converted to epoxyfarnesyl-DMAO methyl ester by the FAD-dependent monooxygenase adrH. The terpene cyclase adrI then catalyzes the carbon skeletal rearrangement to generate the andrastin E, the first compound in the pathway having the andrastin scaffold, with the tetracyclic ring system. The post-cyclization tailoring enzymes adrF, adrE, adrJ, and adrA, are involved in the conversion of andrastin E into andrastin A. The short chain dehydrogenase adrF is responsible for the oxidation of the C-3 a hydroxyl group of andrastin E to yield the corresponding ketone, andrastin D. The ketoreductase adrE stereoselectively reduces the carbonyl moiety to reverse the stereochemistry of the C-3 position to yield andrastin F. The acetyltransferase adrJ is the acetyltransferase that attaches the acetyl group to the C-3 hydroxyl group of andrastin F to yield andrastin C. Finally, the cytochrome P450 monooxygenase adrA catalyzes two sequential oxidation reactions of the C-23 methyl group, to generate the corresponding alcohol andrastin B, and aldehyde andrastin A. The sequence is that of Ketoreductase adrE from Penicillium rubens (strain ATCC 28089 / DSM 1075 / NRRL 1951 / Wisconsin 54-1255) (Penicillium chrysogenum).